The primary structure comprises 691 residues: MFCRKFKDLKITGECPFSLLAPGQVPKEPTEEVAGGSEGCQATLPICQYFPEKNAEGSLPQRKTSRNRVYLHTLAESICKLIFPECERLNLALQRTLAKHKIEENRKSSEKEDLEKIIAEEAIAAGAPVEALKDSLGEELFKICYEEDEHILGVVGGTLKDFLNSFSTLLKQSSHCQEAERRGRLEDASILCLDKDQDFLNVYYFFPKRTTALLLPGIIKAAARILYESHVEVSLMPPCFRSDCTEFVNQPYLLYSVHVKSTKPSLSPGKPQSSLVIPASLFCKTFPFHFMLDRDLAILQLGNGIRRLVNKRDFQGKPNFEEFFEILTPKINQTFSGIMTMLNMQFVIRVRRWDNSVKKSSRVMDLKGQMIYIVESSAILFLGSPCVDRLEDFTGRGLYLSDIPIHNALRDVVLIGEQARAQDGLKKRLGKLKATLEHAHQALEEEKKRTVDLLCSIFPSEVAQQLWQGQIVQAKKFSEVTMLFSDIVGFTAICSQCSPLQVITMLNALYTRFDQQCGELDVYKVETIGDAYCVAGGLHRESDTHAVQIALMALKMMELSNEVMSPHGEPIKMRIGLHSGSVFAGVVGVKMPRYCLFGNNVTLANKFESCSVPRKINVSPTTYRLLKDCPGFVFTPRSREELPPNFPSDIPGICHFLDAYHHQGPNSKPWFQDKDVEDGNANFLGKASGID.

Serine 267 carries the post-translational modification Phosphoserine. The Guanylate cyclase domain occupies 480 to 607 (VTMLFSDIVG…GNNVTLANKF (128 aa)).

It belongs to the adenylyl cyclase class-4/guanylyl cyclase family. The active enzyme is formed by a heterodimer of an alpha and a beta subunit. Heterodimer with GUCY1B1. Mg(2+) is required as a cofactor. Requires Mn(2+) as cofactor.

The protein localises to the cytoplasm. The enzyme catalyses GTP = 3',5'-cyclic GMP + diphosphate. With respect to regulation, activated by nitric oxide in the presence of magnesium or manganese ions. The chain is Guanylate cyclase soluble subunit alpha-1 (Gucy1a1) from Mus musculus (Mouse).